Reading from the N-terminus, the 200-residue chain is MGKTIGLTGSVATGKSTVSNMIQQAGIPLVDADIAARKVVERGTEGLKEIVAYFGEEILLADGTLNRAKLGEIIFKDKEKREKLNEITHPRVKDYMLEARERFFEAGEELVFFDIPLLFESHLESLVDKIVVVWTTPETELKRLMERNNLTKEDALRRIESQMGIDEKARKADFVIDNNESLEKTQKQVLTFIKRFVKNK.

The DPCK domain occupies 4–200; the sequence is TIGLTGSVAT…TFIKRFVKNK (197 aa). 12-17 is an ATP binding site; sequence ATGKST.

This sequence belongs to the CoaE family.

The protein localises to the cytoplasm. The enzyme catalyses 3'-dephospho-CoA + ATP = ADP + CoA + H(+). It functions in the pathway cofactor biosynthesis; coenzyme A biosynthesis; CoA from (R)-pantothenate: step 5/5. In terms of biological role, catalyzes the phosphorylation of the 3'-hydroxyl group of dephosphocoenzyme A to form coenzyme A. In Listeria monocytogenes serotype 4b (strain F2365), this protein is Dephospho-CoA kinase.